The primary structure comprises 177 residues: Large ribosomal subunit protein uL5 (177 aa).

It belongs to the universal ribosomal protein uL5 family. As to quaternary structure, part of the 50S ribosomal subunit; part of the 5S rRNA/L5/L18/L25 subcomplex. Contacts the 5S rRNA and the P site tRNA. Forms a bridge to the 30S subunit in the 70S ribosome.

Functionally, this is one of the proteins that bind and probably mediate the attachment of the 5S RNA into the large ribosomal subunit, where it forms part of the central protuberance. In the 70S ribosome it contacts protein S13 of the 30S subunit (bridge B1b), connecting the 2 subunits; this bridge is implicated in subunit movement. Contacts the P site tRNA; the 5S rRNA and some of its associated proteins might help stabilize positioning of ribosome-bound tRNAs. The protein is Large ribosomal subunit protein uL5 of Neorickettsia sennetsu (strain ATCC VR-367 / Miyayama) (Ehrlichia sennetsu).